The sequence spans 782 residues: Ribosome biogenesis protein ERB1 (782 aa).

2 disordered regions span residues 1–123 (MGSK…RIEK) and 339–361 (PEEYLPSKEEREEWENADPEDRE). Over residues 35 to 86 (SEDEEDYLPSDDDDDVEDSENEGTGASEDDDDDDDDDDILSDDIPSDVDSEE) the composition is skewed to acidic residues. Over residues 105 to 123 (VDPKREEDDGADRNYRIEK) the composition is skewed to basic and acidic residues. WD repeat units follow at residues 433–472 (GHEGRVRSVSVDPTGVALATGGDDGTVRVWELLTGRQVWS), 476–516 (NSEE…VTPA), 567–609 (TVRS…TQIP), 612–650 (KLSGLAQTAAFHPLRPLFFVATQRTIRCYDLQKLELVKV), 653–692 (PGAKWISSFDIHPGGDNLIVGSYDKRLLWHDLDLSNRPYK), 696–736 (FHGQ…DQLE), and 752–782 (VSKLGVLDIDWHPREPWCVSAGADGTARLWM).

This sequence belongs to the WD repeat BOP1/ERB1 family. As to quaternary structure, component of the NOP7 complex, composed of ERB1, NOP7 and YTM1. The complex is held together by ERB1, which interacts with NOP7 via its N-terminal domain and with YTM1 via a high-affinity interaction between the seven-bladed beta-propeller domains of the 2 proteins. The NOP7 complex associates with the 66S pre-ribosome.

The protein localises to the nucleus. Its subcellular location is the nucleolus. The protein resides in the nucleoplasm. Component of the NOP7 complex, which is required for maturation of the 25S and 5.8S ribosomal RNAs and formation of the 60S ribosome. This Chaetomium globosum (strain ATCC 6205 / CBS 148.51 / DSM 1962 / NBRC 6347 / NRRL 1970) (Soil fungus) protein is Ribosome biogenesis protein ERB1.